The chain runs to 330 residues: Ferrochelatase (330 aa).

Fe cation is bound by residues His200 and Glu281.

It belongs to the ferrochelatase family.

It is found in the cytoplasm. The catalysed reaction is heme b + 2 H(+) = protoporphyrin IX + Fe(2+). It functions in the pathway porphyrin-containing compound metabolism; protoheme biosynthesis; protoheme from protoporphyrin-IX: step 1/1. In terms of biological role, catalyzes the ferrous insertion into protoporphyrin IX. The polypeptide is Ferrochelatase (Marinomonas sp. (strain MWYL1)).